We begin with the raw amino-acid sequence, 1177 residues long: DNA-directed RNA polymerase subunit beta (1177 aa).

Residues 1147 to 1161 (DDTEIEMRDTEDDDD) show a composition bias toward acidic residues. Residues 1147–1177 (DDTEIEMRDTEDDDDHQSADKLNVEVETTKE) form a disordered region. Residues 1162–1177 (HQSADKLNVEVETTKE) are compositionally biased toward basic and acidic residues.

It belongs to the RNA polymerase beta chain family. As to quaternary structure, the RNAP catalytic core consists of 2 alpha, 1 beta, 1 beta' and 1 omega subunit. When a sigma factor is associated with the core the holoenzyme is formed, which can initiate transcription.

The catalysed reaction is RNA(n) + a ribonucleoside 5'-triphosphate = RNA(n+1) + diphosphate. Its function is as follows. DNA-dependent RNA polymerase catalyzes the transcription of DNA into RNA using the four ribonucleoside triphosphates as substrates. The chain is DNA-directed RNA polymerase subunit beta from Bacillus anthracis (strain A0248).